The chain runs to 286 residues: Aquaporin PIP1-1 (286 aa).

An N-acetylmethionine modification is found at Met-1. The segment at 1–34 is disordered; that stretch reads MEGKEEDVRVGANKFPERQPIGTSAQSDKDYKEP. The Cytoplasmic portion of the chain corresponds to 1 to 54; sequence MEGKEEDVRVGANKFPERQPIGTSAQSDKDYKEPPPAPFFEPGELSSWSFWRAG. The chain crosses the membrane as a helical span at residues 55–75; it reads IAEFIATFLFLYITVLTVMGV. At 76–91 the chain is on the extracellular side; it reads KRSPNMCASVGIQGIA. The chain crosses the membrane as a helical span at residues 92 to 112; it reads WAFGGMIFALVYCTAGISGGH. Over 113 to 132 the chain is Cytoplasmic; it reads INPAVTFGLFLARKLSLTRA. The short motif at 114-116 is the NPA 1 element; that stretch reads NPA. Residues 133–153 traverse the membrane as a helical segment; sequence LYYIVMQCLGAICGAGVVKGF. The Extracellular segment spans residues 154-174; it reads QPKQYQALGGGANTVAHGYTK. Residues 175–195 form a helical membrane-spanning segment; it reads GSGLGAEIIGTFVLVYTVFSA. Topologically, residues 196-208 are cytoplasmic; sequence TDAKRNARDSHVP. A helical membrane pass occupies residues 209–229; sequence ILAPLPIGFAVFLVHLATIPI. The Extracellular portion of the chain corresponds to 230-256; the sequence is TGTGINPARSLGAAIIYNKDHSWDDHW. The NPA 2 signature appears at 235-237; sequence NPA. The helical transmembrane segment at 257–277 threads the bilayer; the sequence is VFWVGPFIGAALAALYHVVVI. Residues 278–286 lie on the Cytoplasmic side of the membrane; that stretch reads RAIPFKSRS. Ser-284 carries the phosphoserine modification.

Belongs to the MIP/aquaporin (TC 1.A.8) family. PIP (TC 1.A.8.11) subfamily. As to expression, widely expressed. Expressed in roots, above ground and in flower buds.

It localises to the cell membrane. In terms of biological role, water channel required to facilitate the transport of water across cell membrane. Its function is impaired by Hg(2+). The chain is Aquaporin PIP1-1 (PIP1-1) from Arabidopsis thaliana (Mouse-ear cress).